Consider the following 124-residue polypeptide: MADDLKRFLYKKLPSVEGLHAIVVSDRDGVPVIKVANDNAPEHALRPGFLSTFALATDQGSKLGLSKNKSIICYYNTYQVVQFNRLPLVVSFIASSSANTGLIVSLEKELAPLFEELRQVVEVS.

The interval 57–70 (TDQGSKLGLSKNKS) is required for interaction with LAMTOR2.

This sequence belongs to the LAMTOR3 family. As to quaternary structure, part of the Ragulator complex composed of LAMTOR1, LAMTOR2, LAMTOR3, LAMTOR4 and LAMTOR5. LAMTOR4 and LAMTOR5 form a heterodimer that interacts, through LAMTOR1, with a LAMTOR2, LAMTOR3 heterodimer. Interacts with LAMTOR1 and LAMTOR2; the interaction is direct. The Ragulator complex interacts with both the mTORC1 complex and heterodimers constituted of the Rag GTPases RagA/RRAGA, RagB/RRAGB, RagC/RRAGC and RagD/RRAGD; regulated by amino acid availability. The Ragulator complex interacts with SLC38A9; the probable amino acid sensor. Component of the lysosomal folliculin complex (LFC), composed of FLCN, FNIP1 (or FNIP2), RagA/RRAGA or RagB/RRAGB GDP-bound, RagC/RRAGC or RagD/RRAGD GTP-bound, and Ragulator. Interacts with MAP2K1/MEK1 and MAPK2. Interacts with MORG1.

It is found in the late endosome membrane. Its function is as follows. As part of the Ragulator complex it is involved in amino acid sensing and activation of mTORC1, a signaling complex promoting cell growth in response to growth factors, energy levels, and amino acids. Activated by amino acids through a mechanism involving the lysosomal V-ATPase, the Ragulator plays a dual role for the small GTPases Rag (RagA/RRAGA, RagB/RRAGB, RagC/RRAGC and/or RagD/RRAGD): it (1) acts as a guanine nucleotide exchange factor (GEF), activating the small GTPases Rag and (2) mediates recruitment of Rag GTPases to the lysosome membrane. Activated Ragulator and Rag GTPases function as a scaffold recruiting mTORC1 to lysosomes where it is in turn activated. Adapter protein that enhances the efficiency of the MAP kinase cascade facilitating the activation of MAPK2. The polypeptide is Ragulator complex protein LAMTOR3 (Homo sapiens (Human)).